The sequence spans 78 residues: Beta-defensin 29 (78 aa).

The first 23 residues, methionine 1–glycine 23, serve as a signal peptide directing secretion. 3 disulfides stabilise this stretch: cysteine 40–cysteine 67, cysteine 47–cysteine 61, and cysteine 51–cysteine 68.

It belongs to the beta-defensin family.

The protein resides in the secreted. In terms of biological role, has antibacterial activity. This Rattus norvegicus (Rat) protein is Beta-defensin 29 (Defb29).